The chain runs to 67 residues: MPKMKTKSGAKKRFRVRPGGTVKRGQAFKRHILTKKTTKNKRHLRGAVTVHETNMGHMAQMLPGQGI.

A compositionally biased stretch (basic residues) spans methionine 1–valine 16. The disordered stretch occupies residues methionine 1–glycine 25.

The protein belongs to the bacterial ribosomal protein bL35 family.

This chain is Large ribosomal subunit protein bL35, found in Polaromonas sp. (strain JS666 / ATCC BAA-500).